We begin with the raw amino-acid sequence, 178 residues long: 2-C-methyl-D-erythritol 2,4-cyclodiphosphate synthase (178 aa).

The a divalent metal cation site is built by D24, H26, and H61. A 4-CDP-2-C-methyl-D-erythritol 2-phosphate-binding site is contributed by 24-26 (DSH). 150-153 (TSGE) is a 4-CDP-2-C-methyl-D-erythritol 2-phosphate binding site.

The protein belongs to the IspF family. As to quaternary structure, homotrimer. The cofactor is a divalent metal cation.

It catalyses the reaction 4-CDP-2-C-methyl-D-erythritol 2-phosphate = 2-C-methyl-D-erythritol 2,4-cyclic diphosphate + CMP. The protein operates within isoprenoid biosynthesis; isopentenyl diphosphate biosynthesis via DXP pathway; isopentenyl diphosphate from 1-deoxy-D-xylulose 5-phosphate: step 4/6. In terms of biological role, involved in the biosynthesis of isopentenyl diphosphate (IPP) and dimethylallyl diphosphate (DMAPP), two major building blocks of isoprenoid compounds. Catalyzes the conversion of 4-diphosphocytidyl-2-C-methyl-D-erythritol 2-phosphate (CDP-ME2P) to 2-C-methyl-D-erythritol 2,4-cyclodiphosphate (ME-CPP) with a corresponding release of cytidine 5-monophosphate (CMP). In Chlamydia trachomatis serovar A (strain ATCC VR-571B / DSM 19440 / HAR-13), this protein is 2-C-methyl-D-erythritol 2,4-cyclodiphosphate synthase.